Reading from the N-terminus, the 244-residue chain is Probable 2-phosphosulfolactate phosphatase (244 aa).

Belongs to the ComB family. Mg(2+) serves as cofactor.

It catalyses the reaction (2R)-O-phospho-3-sulfolactate + H2O = (2R)-3-sulfolactate + phosphate. This Thermosynechococcus vestitus (strain NIES-2133 / IAM M-273 / BP-1) protein is Probable 2-phosphosulfolactate phosphatase.